We begin with the raw amino-acid sequence, 478 residues long: MTHSTQQLSPEGVAEGKRGRLIRELVNRDKTPLIILIMAAVVGVVTGLLGVAFDRGVDWVQQQRLLALANVADYALLVWPLAFIMSALLAMMGYFLVSRFAPEAGGSGIPEIEGAMEEMRPVRWWRVIPVKFIGGLGTLGAGMVLGREGPMVQMGGNSGRMIVDIFRLRSPEARHSLLATGAAAGLSAAFNAPLAGILFVIEEMRSQFRYSLVSIKAVFIGVITSTIVYRYFNGERAIIEVGKLSDAPLNTLWLYLLLGIIFGAVGVIFNALIFRTQDMFVRFHGGDWRKLVLIGGLLGGMCGLLALLHGNAVGGGFALIPIAAAGNFSIGMLLFIFIARVITTLLCFGSGAPGGIFAPMLALGTILGTAFGLSCAHFFPQYGIEAGTFAIAGMGALFAASVRAPLTGIVLVLEMTDNYQLILPMIVTCLGATLIAQFMGGKPLYSAILARTLAKQEQARATVIAQEPAVENTPQIGK.

Topologically, residues 1 to 32 are cytoplasmic; it reads MTHSTQQLSPEGVAEGKRGRLIRELVNRDKTP. Residues 33-69 form a helical membrane-spanning segment; the sequence is LIILIMAAVVGVVTGLLGVAFDRGVDWVQQQRLLALA. Topologically, residues 70–76 are periplasmic; sequence NVADYAL. Residues 77–100 traverse the membrane as a helical segment; it reads LVWPLAFIMSALLAMMGYFLVSRF. Residues 106-110 carry the Selectivity filter part_1 motif; it reads GSGIP. Chloride is bound at residue S107. The segment at residues 109–116 is an intramembrane region (helical); sequence IPEIEGAM. Residues 117 to 123 lie on the Cytoplasmic side of the membrane; it reads EEMRPVR. Helical transmembrane passes span 124–141 and 148–166; these read WWRVIPVKFIGGLGTLGA and EGPMVQMGGNSGRMIVDIF. Residues 146–150 carry the Selectivity filter part_2 motif; it reads GREGP. Residues 167 to 176 are Cytoplasmic-facing; the sequence is RLRSPEARHS. Intramembrane regions (helical) lie at residues 177–189 and 193–201; these read LLATGAAAGLSAA and PLAGILFVI. The Cytoplasmic segment spans residues 202-214; sequence EEMRSQFRYSLVS. A helical membrane pass occupies residues 215–232; that stretch reads IKAVFIGVITSTIVYRYF. The Periplasmic portion of the chain corresponds to 233-252; the sequence is NGERAIIEVGKLSDAPLNTL. Residues 253-281 form a helical membrane-spanning segment; sequence WLYLLLGIIFGAVGVIFNALIFRTQDMFV. At 282–287 the chain is on the cytoplasmic side; the sequence is RFHGGD. A helical membrane pass occupies residues 288-309; sequence WRKLVLIGGLLGGMCGLLALLH. At 310–329 the chain is on the periplasmic side; the sequence is GNAVGGGFALIPIAAAGNFS. 2 consecutive transmembrane segments (helical) span residues 330–349 and 355–376; these read IGMLLFIFIARVITTLLCFG and GIFAPMLALGTILGTAFGLSCA. Positions 355–359 match the Selectivity filter part_3 motif; it reads GIFAP. Residues I356 and F357 each contribute to the chloride site. At 377-386 the chain is on the periplasmic side; sequence HFFPQYGIEA. Residues 387–401 constitute an intramembrane region (helical); that stretch reads GTFAIAGMGALFAAS. The segment at residues 402–404 is an intramembrane region (note=Loop between two helices); it reads VRA. An intramembrane region (helical) is located at residues 405–416; that stretch reads PLTGIVLVLEMT. The note=Loop between two helices intramembrane region spans 417–421; sequence DNYQL. The helical transmembrane segment at 422 to 438 threads the bilayer; that stretch reads ILPMIVTCLGATLIAQF. Topologically, residues 439-478 are cytoplasmic; that stretch reads MGGKPLYSAILARTLAKQEQARATVIAQEPAVENTPQIGK. Position 445 (Y445) interacts with chloride.

This sequence belongs to the chloride channel (TC 2.A.49) family. ClcA subfamily. As to quaternary structure, homodimer.

Its subcellular location is the cell inner membrane. The enzyme catalyses 2 chloride(in) + H(+)(out) = 2 chloride(out) + H(+)(in). Functionally, proton-coupled chloride transporter. Functions as antiport system and exchanges two chloride ions for 1 proton. Probably acts as an electrical shunt for an outwardly-directed proton pump that is linked to amino acid decarboxylation, as part of the extreme acid resistance (XAR) response. This chain is H(+)/Cl(-) exchange transporter ClcA, found in Yersinia pestis bv. Antiqua (strain Antiqua).